Here is a 439-residue protein sequence, read N- to C-terminus: Capsid vertex component 1 (439 aa).

The protein belongs to the herpesviridae CVC1 protein family. As to quaternary structure, interacts (via C-terminus) with capsid vertex component 2/CVC2.

It is found in the virion. It localises to the host nucleus. Functionally, capsid vertex-specific component that plays a role during viral DNA encapsidation, assuring correct genome cleavage and presumably stabilizing capsids that contain full-length viral genomes. The sequence is that of Capsid vertex component 1 from Homo sapiens (Human).